The sequence spans 627 residues: Phosphomethylpyrimidine synthase (627 aa).

The segment covering 1–21 (MSAQQQKNLSESAQVDQQSVQ) has biased composition (polar residues). The disordered stretch occupies residues 1-32 (MSAQQQKNLSESAQVDQQSVQPFPRSQKVYVQ). Substrate is bound by residues N231, M260, Y289, H325, 345–347 (SRG), 386–389 (DGLR), and E425. Residue H429 participates in Zn(2+) binding. A substrate-binding site is contributed by Y452. H493 serves as a coordination point for Zn(2+). C573, C576, and C581 together coordinate [4Fe-4S] cluster.

This sequence belongs to the ThiC family. Homodimer. It depends on [4Fe-4S] cluster as a cofactor.

It catalyses the reaction 5-amino-1-(5-phospho-beta-D-ribosyl)imidazole + S-adenosyl-L-methionine = 4-amino-2-methyl-5-(phosphooxymethyl)pyrimidine + CO + 5'-deoxyadenosine + formate + L-methionine + 3 H(+). Its pathway is cofactor biosynthesis; thiamine diphosphate biosynthesis. Catalyzes the synthesis of the hydroxymethylpyrimidine phosphate (HMP-P) moiety of thiamine from aminoimidazole ribotide (AIR) in a radical S-adenosyl-L-methionine (SAM)-dependent reaction. The polypeptide is Phosphomethylpyrimidine synthase (Ectopseudomonas mendocina (strain ymp) (Pseudomonas mendocina)).